Consider the following 410-residue polypeptide: Proteasome-activating nucleotidase (410 aa).

Residues 1 to 70 (MENNSQNVLK…LRGEIERFRT (70 aa)) adopt a coiled-coil conformation. Residues 195-200 (GTGKTL) and His334 each bind ATP. Residues 408–410 (MFG) are docks into pockets in the proteasome alpha-ring to cause gate opening.

It belongs to the AAA ATPase family. As to quaternary structure, homohexamer. The hexameric complex has a two-ring architecture resembling a top hat that caps the 20S proteasome core at one or both ends. Upon ATP-binding, the C-terminus of PAN interacts with the alpha-rings of the proteasome core by binding to the intersubunit pockets.

The protein resides in the cytoplasm. Functionally, ATPase which is responsible for recognizing, binding, unfolding and translocation of substrate proteins into the archaeal 20S proteasome core particle. Is essential for opening the gate of the 20S proteasome via an interaction with its C-terminus, thereby allowing substrate entry and access to the site of proteolysis. Thus, the C-termini of the proteasomal ATPase function like a 'key in a lock' to induce gate opening and therefore regulate proteolysis. Unfolding activity requires energy from ATP hydrolysis, whereas ATP binding alone promotes ATPase-20S proteasome association which triggers gate opening, and supports translocation of unfolded substrates. The polypeptide is Proteasome-activating nucleotidase (Methanothermobacter thermautotrophicus (strain ATCC 29096 / DSM 1053 / JCM 10044 / NBRC 100330 / Delta H) (Methanobacterium thermoautotrophicum)).